Reading from the N-terminus, the 786-residue chain is Endonuclease MutS2 (786 aa).

Position 332 to 339 (332 to 339) interacts with ATP; it reads GPNTGGKT. The region spanning 711–786 is the Smr domain; the sequence is VDLRGMDSIE…GTGVTIVELK (76 aa).

The protein belongs to the DNA mismatch repair MutS family. MutS2 subfamily. Homodimer. Binds to stalled ribosomes, contacting rRNA.

Its function is as follows. Endonuclease that is involved in the suppression of homologous recombination and thus may have a key role in the control of bacterial genetic diversity. Functionally, acts as a ribosome collision sensor, splitting the ribosome into its 2 subunits. Detects stalled/collided 70S ribosomes which it binds and splits by an ATP-hydrolysis driven conformational change. Acts upstream of the ribosome quality control system (RQC), a ribosome-associated complex that mediates the extraction of incompletely synthesized nascent chains from stalled ribosomes and their subsequent degradation. Probably generates substrates for RQC. In Clostridium kluyveri (strain NBRC 12016), this protein is Endonuclease MutS2.